A 49-amino-acid chain; its full sequence is Large ribosomal subunit protein eL40 (49 aa).

This sequence belongs to the eukaryotic ribosomal protein eL40 family.

The chain is Large ribosomal subunit protein eL40 from Haloquadratum walsbyi (strain DSM 16790 / HBSQ001).